Consider the following 152-residue polypeptide: ESAT-6 secretion machinery protein EssA (152 aa).

Residues 1–114 (MLMNSVIALT…PYIQNKQEKK (114 aa)) are Cytoplasmic-facing. Residues 62 to 83 (ERQQQIKNDMFQNQASHSTRLN) are disordered. The span at 66–80 (QIKNDMFQNQASHST) shows a compositional bias: polar residues. The helical transmembrane segment at 115–135 (IFPYILMSVGAFLTLGFVIFS) threads the bilayer. The Extracellular portion of the chain corresponds to 136-152 (IHKGRRTKNESARKSNI).

The protein belongs to the EssA family.

The protein resides in the cell membrane. Component of the ESAT-6 secretion system (Ess). Required for the secretion of EsxA and EsxB. The chain is ESAT-6 secretion machinery protein EssA from Staphylococcus aureus (strain COL).